We begin with the raw amino-acid sequence, 144 residues long: Large ribosomal subunit protein uL15 (144 aa).

Positions 1–13 (MKLNELKPAEGSR) are enriched in basic and acidic residues. The tract at residues 1-47 (MKLNELKPAEGSRKVRNRVGRGDSSGNGKTAGRGQKGQKARSKTRLG) is disordered. Positions 23–35 (DSSGNGKTAGRGQ) are enriched in gly residues.

This sequence belongs to the universal ribosomal protein uL15 family. As to quaternary structure, part of the 50S ribosomal subunit.

In terms of biological role, binds to the 23S rRNA. The polypeptide is Large ribosomal subunit protein uL15 (Levilactobacillus brevis (strain ATCC 367 / BCRC 12310 / CIP 105137 / JCM 1170 / LMG 11437 / NCIMB 947 / NCTC 947) (Lactobacillus brevis)).